Consider the following 296-residue polypeptide: MLNRFSYSSNAWHNLRVDGPDADGIAVIVLARSQSRNALTLPMLTDMVQLLSAMDADDSVKCIVFTGEGQFFCSGVDLTEGFGEIGKTRDTHRDAGGKLALAIHNCRKPTIAAINGTAVGVGITMTLPMSIRIAAESAKISFPFVRRGIVADAASSFYLPRLIGYGRALHLFTTGALYPAESGLLHGLFSETVNPASSTLPRALEVARDIAVNASQVGVYLTRDLIYRSLRSPEQAHLLESATLYTRYQSQDFEEGVKSFLEKRRPRFQDTMHEQSGEGVLERGDCVVSLASKPKL.

The short motif at 294–296 is the Peroxisomal targeting signal type 1 element; sequence PKL.

It belongs to the enoyl-CoA hydratase/isomerase family.

Its subcellular location is the peroxisome. The catalysed reaction is a (3S)-3-hydroxyacyl-CoA = a (2E)-enoyl-CoA + H2O. It carries out the reaction a 4-saturated-(3S)-3-hydroxyacyl-CoA = a (3E)-enoyl-CoA + H2O. It participates in mycotoxin biosynthesis. Functionally, enoyl-CoA hydratase; part of the gene clusters that mediate the biosynthesis of the host-selective toxins (HSTs) ACT-toxins responsible for brown spot of tangerine disease by the tangerine pathotype which affects tangerines and mandarins. ACT-toxins consist of three moieties, 9,10-epoxy-8-hydroxy-9-methyl-decatrienoic acid (EDA), valine and a polyketide. ACT-toxin I is toxic to both citrus and pear; toxin II the 5''-deoxy derivative of ACT-toxin I, is highly toxic to pear and slightly toxic to citrus. On cellular level, ACT-toxins affect plasma membrane of susceptible cells and cause a sudden increase in loss of K(+) after a few minutes of toxin treatment. The acyl-CoA ligase ACTT1, the hydrolase ACTT2, the enoyl-CoA hydratases ACTT3 and ACTT6, and the acyl-CoA synthetase ACTT5 are all involved in the biosynthesis of the AK-, AF- and ACT-toxin common 9,10-epoxy-8-hydroxy-9-methyl-decatrienoic acid (EDA) structural moiety. The exact role of each enzyme, and of additional enzymes identified within the AF-toxin clusters have still to be determined. On the other hand, ACTTS1 to ACTTS4 are specific to the tangerine pathotype. The function of ACTTS3 is to elongate the polyketide chain portion of ACT-toxin that is unique to this toxin. The enoyl-reductase ACTTS2 might complement the missing enoyl-reductase (ER) domain in ACTTS3 in the synthesis of the polyketide portion of ACT-toxin. The roles of the nonribosomal peptide synthetases-related proteins ACTTS1 and ACTTS4 have also still not been elucidated. The sequence is that of Enoyl-CoA hydratase ACTT3 from Alternaria alternata (Alternaria rot fungus).